We begin with the raw amino-acid sequence, 264 residues long: 5'-nucleotidase SurE (264 aa).

Positions 10, 11, 43, and 99 each coordinate a divalent metal cation.

Belongs to the SurE nucleotidase family. A divalent metal cation is required as a cofactor.

It localises to the cytoplasm. It catalyses the reaction a ribonucleoside 5'-phosphate + H2O = a ribonucleoside + phosphate. In terms of biological role, nucleotidase that shows phosphatase activity on nucleoside 5'-monophosphates. The protein is 5'-nucleotidase SurE of Methanococcus maripaludis (strain C6 / ATCC BAA-1332).